The chain runs to 340 residues: Fructose-1,6-bisphosphatase class 1 (340 aa).

E107, D126, L128, and D129 together coordinate Mg(2+). Substrate is bound at residue N215. E287 contributes to the Mg(2+) binding site.

It belongs to the FBPase class 1 family. In terms of assembly, homotetramer. The cofactor is Mg(2+).

The protein localises to the cytoplasm. It catalyses the reaction beta-D-fructose 1,6-bisphosphate + H2O = beta-D-fructose 6-phosphate + phosphate. The protein operates within carbohydrate biosynthesis; gluconeogenesis. The protein is Fructose-1,6-bisphosphatase class 1 of Brucella suis (strain ATCC 23445 / NCTC 10510).